The following is a 421-amino-acid chain: Gamma-glutamyl phosphate reductase (421 aa).

The protein belongs to the gamma-glutamyl phosphate reductase family.

It is found in the cytoplasm. The enzyme catalyses L-glutamate 5-semialdehyde + phosphate + NADP(+) = L-glutamyl 5-phosphate + NADPH + H(+). It functions in the pathway amino-acid biosynthesis; L-proline biosynthesis; L-glutamate 5-semialdehyde from L-glutamate: step 2/2. In terms of biological role, catalyzes the NADPH-dependent reduction of L-glutamate 5-phosphate into L-glutamate 5-semialdehyde and phosphate. The product spontaneously undergoes cyclization to form 1-pyrroline-5-carboxylate. In Pseudomonas aeruginosa (strain ATCC 15692 / DSM 22644 / CIP 104116 / JCM 14847 / LMG 12228 / 1C / PRS 101 / PAO1), this protein is Gamma-glutamyl phosphate reductase.